We begin with the raw amino-acid sequence, 1789 residues long: Protein TIC 214 (1789 aa).

The next 6 helical transmembrane spans lie at 19–39 (IINS…FSIG), 68–88 (FIAG…HLAL), 91–111 (PHTI…WNNH), 133–153 (VFLN…SSML), 176–196 (VGWL…LVWI), and 227–247 (IFSI…PSPI).

Belongs to the TIC214 family. In terms of assembly, part of the Tic complex.

The protein localises to the plastid. Its subcellular location is the chloroplast inner membrane. Its function is as follows. Involved in protein precursor import into chloroplasts. May be part of an intermediate translocation complex acting as a protein-conducting channel at the inner envelope. The sequence is that of Protein TIC 214 from Capsella bursa-pastoris (Shepherd's purse).